A 229-amino-acid polypeptide reads, in one-letter code: Ras-related protein RabZ (229 aa).

Residues 1 to 39 form a disordered region; the sequence is MGCFHSREPTATGKTKKEEPTSAVKTNKEEKSSNYVSEP. The N-myristoyl glycine moiety is linked to residue Gly2. Cys3 carries the S-palmitoyl cysteine lipid modification. A compositionally biased stretch (basic and acidic residues) spans 15 to 32; the sequence is TKKEEPTSAVKTNKEEKS. Residue 57 to 64 participates in GTP binding; sequence GDQATGKS. Residues 79 to 88 carry the Effector region motif; it reads HKPSPIIIDC. GTP is bound by residues 106 to 110 and 164 to 167; these read DTAGQ and NKCD.

This sequence belongs to the small GTPase superfamily. Rab family. Post-translationally, although this sequence lacks the C-terminal cysteine motifs subject to isoprenylation in other Rab proteins, it does have N-terminal myristoylation and S-palmitoylation sequence motifs.

The chain is Ras-related protein RabZ (rabZ) from Dictyostelium discoideum (Social amoeba).